A 568-amino-acid chain; its full sequence is Small ribosomal subunit protein bS1 (568 aa).

S1 motif domains are found at residues K39–E100, G118–R184, G205–K273, G290–K360, G377–K447, and G464–K533.

The protein belongs to the bacterial ribosomal protein bS1 family.

Its function is as follows. Binds mRNA; thus facilitating recognition of the initiation point. It is needed to translate mRNA with a short Shine-Dalgarno (SD) purine-rich sequence. This is Small ribosomal subunit protein bS1 (rpsA) from Rickettsia typhi (strain ATCC VR-144 / Wilmington).